An 892-amino-acid polypeptide reads, in one-letter code: DNA mismatch repair protein MutS (892 aa).

Residue 607–614 participates in ATP binding; the sequence is GPNMSGKS.

It belongs to the DNA mismatch repair MutS family.

Functionally, this protein is involved in the repair of mismatches in DNA. It is possible that it carries out the mismatch recognition step. This protein has a weak ATPase activity. The protein is DNA mismatch repair protein MutS of Bacillus cereus (strain AH820).